The following is a 593-amino-acid chain: MKISVGLYGTNAHQIALAMIQGFNKHYTLFRQTSREAKTRFEQADWLGVHKAVKERIRFYDDRVDECVERLRNQFDAASIDDTTWQQVKLLYIGLLLNHKQPELAETFFNSVTTKILHRNYFHNDFIFVRPSISTENIEGDDTQTYRSYYAKEDGLRGTVLKIVKDFDWHRPFVDLEHDVEHVYHAVRHFLNGMPPREVNFQIQVLGSAFYRNKAAYIIGKAINGATEYPFTIPVLQNEAGQLYLDTILLDAWRIGLLFSLSRAYFMVDMEVPSGYVQFLRSILPAKPRSELYIMLGLGKQGKTMFFRDLIYHLHHSEDKFIMAPGIRGLVMLVFTLPSYPYVFKLIKDVFGSSKEMDRATVKKKFMMVKQVDRVGRMADTLEFSNVMFPLKRFNDEVLAELQQLAPSCFEVDGDQLIIKHLYIERRMEPLNIHLDRMERANNVERLEHVIREYGSAIREMAQANIFPGDMLWKNFGVTRFGRVVFYDYDEIEYMTDIKFRQIPPAPDFETEMSGEVWYAVSRNDVFPEEFATFLLTSPQVRKIFIKYHKDLLSPRFWLEAQEKIRSGYVEDFFPYPQELRFINRQTDLTEEQ.

Residues 324–330 (APGIRGL) and K345 contribute to the ATP site. D380 is an active-site residue.

It belongs to the AceK family.

Its subcellular location is the cytoplasm. It carries out the reaction L-seryl-[isocitrate dehydrogenase] + ATP = O-phospho-L-seryl-[isocitrate dehydrogenase] + ADP + H(+). Functionally, bifunctional enzyme which can phosphorylate or dephosphorylate isocitrate dehydrogenase (IDH) on a specific serine residue. This is a regulatory mechanism which enables bacteria to bypass the Krebs cycle via the glyoxylate shunt in response to the source of carbon. When bacteria are grown on glucose, IDH is fully active and unphosphorylated, but when grown on acetate or ethanol, the activity of IDH declines drastically concomitant with its phosphorylation. This chain is Isocitrate dehydrogenase kinase/phosphatase, found in Dechloromonas aromatica (strain RCB).